Consider the following 91-residue polypeptide: Defensin-like protein 269 (91 aa).

The N-terminal stretch at 1–25 is a signal peptide; sequence MAVSKTTMLIVLVAIILSCVSISNA. 4 disulfides stabilise this stretch: C41/C82, C53/C72, C59/C77, and C63/C79.

This sequence belongs to the DEFL family.

The protein localises to the secreted. The polypeptide is Defensin-like protein 269 (Arabidopsis thaliana (Mouse-ear cress)).